A 343-amino-acid polypeptide reads, in one-letter code: 3-oxopimeloyl-[acyl-carrier-protein] synthase (343 aa).

Active-site residues include Cys132 and His272. Residues 273–277 (QANHR) are ACP-binding. Asn302 is an active-site residue.

This sequence belongs to the thiolase-like superfamily. BioZ family.

The catalysed reaction is malonyl-[ACP] + an acyl-CoA + H(+) = a 3-oxoacyl-[ACP] + CO2 + CoA. The enzyme catalyses glutaryl-CoA + malonyl-[ACP] + H(+) = 3-oxo-6-carboxyhexanoyl-[ACP] + CO2 + CoA. Its pathway is cofactor biosynthesis; biotin biosynthesis. In terms of biological role, involved in the formation of the biotin precursor pimeloyl-ACP. Catalyzes the condensation of glutaryl-CoA, an intermediate in lysine degradation, with malonyl-ACP to produce 3-oxopimeloyl-ACP. The protein is 3-oxopimeloyl-[acyl-carrier-protein] synthase of Rhodothermus marinus (strain ATCC 43812 / DSM 4252 / R-10) (Rhodothermus obamensis).